We begin with the raw amino-acid sequence, 436 residues long: 3-ketoacyl-CoA thiolase (436 aa).

The active-site Acyl-thioester intermediate is C99. Catalysis depends on proton acceptor residues H392 and C422.

Belongs to the thiolase-like superfamily. Thiolase family. Heterotetramer of two alpha chains (FadJ) and two beta chains (FadI).

The protein localises to the cytoplasm. It catalyses the reaction an acyl-CoA + acetyl-CoA = a 3-oxoacyl-CoA + CoA. It participates in lipid metabolism; fatty acid beta-oxidation. Catalyzes the final step of fatty acid oxidation in which acetyl-CoA is released and the CoA ester of a fatty acid two carbons shorter is formed. The chain is 3-ketoacyl-CoA thiolase from Shewanella pealeana (strain ATCC 700345 / ANG-SQ1).